An 811-amino-acid polypeptide reads, in one-letter code: G-type lectin S-receptor-like serine/threonine-protein kinase LECRK2 (811 aa).

A signal peptide spans 1–23; it reads MAPILFLPILQILLIYCTKSAQA. The 130-residue stretch at 24 to 153 folds into the Bulb-type lectin domain; that stretch reads QLNISIGSSL…DGATKWESFG (130 aa). Residues 24–464 lie on the Extracellular side of the membrane; sequence QLNISIGSSL…DKKYWILGSS (441 aa). 7 N-linked (GlcNAc...) asparagine glycosylation sites follow: Asn-26, Asn-39, Asn-59, Asn-219, Asn-226, Asn-237, and Asn-242. Positions 292–344 constitute an EGF-like; atypical domain; that stretch reads PENICQTIQTKVGSGACGFNSYCTFDGTKNTTNCLCPQRYKFFDNERTYKGCR. 5 disulfides stabilise this stretch: Cys-296–Cys-314, Cys-308–Cys-325, Cys-327–Cys-343, Cys-389–Cys-411, and Cys-393–Cys-399. The N-linked (GlcNAc...) asparagine glycan is linked to Asn-321. Positions 352–436 constitute a PAN domain; the sequence is CDLDETAAMV…LQATVLLKVP (85 aa). The chain crosses the membrane as a helical span at residues 465-485; the sequence is LFFGSSVLVNFLLIFVLLFGT. The Cytoplasmic segment spans residues 486-811; that stretch reads YCSITSRKKT…DPSSYISSLA (326 aa). Positions 521-795 constitute a Protein kinase domain; sequence GGFHEVLGTG…KVMQMLDGAV (275 aa). Residues 527–535 and Lys-551 contribute to the ATP site; that span reads LGTGASGIV. The Proton acceptor role is filled by Asp-645.

This sequence belongs to the protein kinase superfamily. Ser/Thr protein kinase family.

It localises to the membrane. The catalysed reaction is L-seryl-[protein] + ATP = O-phospho-L-seryl-[protein] + ADP + H(+). It carries out the reaction L-threonyl-[protein] + ATP = O-phospho-L-threonyl-[protein] + ADP + H(+). Involved in resistance against the herbivorous insect brown planthopper (N.lugens, BPH). Member of the BPH3 (BPH resistance locus 3) cluster which contains LECRK1, LECRK2 and LECRK3. This chain is G-type lectin S-receptor-like serine/threonine-protein kinase LECRK2, found in Oryza sativa subsp. indica (Rice).